The primary structure comprises 222 residues: Adenylate kinase (222 aa).

A propeptide (removed in mature form) is located at residue serine 2. Serine 2 and serine 3 each carry N-acetylserine. 16-21 (GAGKGT) lines the ATP pocket. The NMP stretch occupies residues 36–65 (ATGDMLRSQIAKGTQLGLEAKKIMDQGGLV). AMP contacts are provided by residues threonine 37, arginine 42, 63-65 (GLV), 92-95 (GFPR), and glutamine 99. The LID stretch occupies residues 133–170 (GRLIHPASGRSYHKIFNPPKEDMKDDVTGEALVQRSDD). Residues arginine 134 and 143 to 144 (SY) contribute to the ATP site. AMP is bound by residues arginine 167 and arginine 178. Residue glutamine 206 coordinates ATP.

The protein belongs to the adenylate kinase family. AK2 subfamily. As to quaternary structure, monomer.

The protein resides in the cytoplasm. Its subcellular location is the cytosol. It localises to the mitochondrion intermembrane space. It catalyses the reaction AMP + ATP = 2 ADP. Catalyzes the reversible transfer of the terminal phosphate group between ATP and AMP. Plays an important role in cellular energy homeostasis and in adenine nucleotide metabolism. Adenylate kinase activity is critical for regulation of the phosphate utilization and the AMP de novo biosynthesis pathways. This Saccharomyces cerevisiae (strain YJM789) (Baker's yeast) protein is Adenylate kinase.